Here is a 177-residue protein sequence, read N- to C-terminus: Large ribosomal subunit protein uL6 (177 aa).

This sequence belongs to the universal ribosomal protein uL6 family. As to quaternary structure, part of the 50S ribosomal subunit.

Its function is as follows. This protein binds to the 23S rRNA, and is important in its secondary structure. It is located near the subunit interface in the base of the L7/L12 stalk, and near the tRNA binding site of the peptidyltransferase center. This chain is Large ribosomal subunit protein uL6, found in Beijerinckia indica subsp. indica (strain ATCC 9039 / DSM 1715 / NCIMB 8712).